Consider the following 548-residue polypeptide: MAAKDVKFGNDARVKMLRGVNVLADAVKVTLGPKGRNVVLDKSFGAPTITKDGVSVAREIELEDKFENMGAQMVKEVASKANDAAGDGTTTATVLAQAIITEGLKAVAAGMNPMDLKRGIDKAVTAAVEELKALSVPCSDSKAIAQVGTISANSDETVGKLIAEAMDKVGKEGVITVEDGTGLQDELDVVEGMQFDRGYLSPYFINKPETGAVELESPFILLADKKISNIREMLPVLEAVAKAGKPLLIIAEDVEGEALATLVVNTMRGIVKVAAVKAPGFGDRRKAMLQDIATLTGGTVISEEIGMELEKATLEDLGQAKRVVINKDTTTIIDGVGEEAAIQGRVAQIRQQIEEATSDYDREKLQERVAKLAGGVAVIKVGAATEVEMKEKKARVEDALHATRAAVEEGVVAGGGVALIRVASKLADLRGQNEDQNVGIKVALRAMEAPLRQIVLNCGEEPSVVANTVKGGDGNYGYNAATEEYGNMIDMGILDPTKVTRSALQYAASVAGLMITTECMVTDLPKNDAADLGAAGGMGGMGGMGGMM.

Residues Thr-30–Pro-33, Lys-51, Asp-87–Thr-91, Gly-415, Asn-479–Ala-481, and Asp-495 each bind ATP.

This sequence belongs to the chaperonin (HSP60) family. In terms of assembly, forms a cylinder of 14 subunits composed of two heptameric rings stacked back-to-back. Interacts with the co-chaperonin GroES.

Its subcellular location is the cytoplasm. It carries out the reaction ATP + H2O + a folded polypeptide = ADP + phosphate + an unfolded polypeptide.. Its function is as follows. Together with its co-chaperonin GroES, plays an essential role in assisting protein folding. The GroEL-GroES system forms a nano-cage that allows encapsulation of the non-native substrate proteins and provides a physical environment optimized to promote and accelerate protein folding. The protein is Chaperonin GroEL 1 of Escherichia coli O1:K1 / APEC.